The primary structure comprises 454 residues: uncharacterized protein (454 aa).

The interval 422–454 is disordered; that stretch reads EWLPPAHLDHGQPRTNSYFHPEKLLHDSDEDDP.

It belongs to the Rv1128c/1148c/1588c/1702c/1945/3466 family.

This is an uncharacterized protein from Mycobacterium tuberculosis (strain CDC 1551 / Oshkosh).